We begin with the raw amino-acid sequence, 251 residues long: Ubiquinone/menaquinone biosynthesis C-methyltransferase UbiE (251 aa).

S-adenosyl-L-methionine contacts are provided by residues Thr74, Asp95, and 123-124 (NA).

Belongs to the class I-like SAM-binding methyltransferase superfamily. MenG/UbiE family.

It catalyses the reaction a 2-demethylmenaquinol + S-adenosyl-L-methionine = a menaquinol + S-adenosyl-L-homocysteine + H(+). It carries out the reaction a 2-methoxy-6-(all-trans-polyprenyl)benzene-1,4-diol + S-adenosyl-L-methionine = a 5-methoxy-2-methyl-3-(all-trans-polyprenyl)benzene-1,4-diol + S-adenosyl-L-homocysteine + H(+). It participates in quinol/quinone metabolism; menaquinone biosynthesis; menaquinol from 1,4-dihydroxy-2-naphthoate: step 2/2. The protein operates within cofactor biosynthesis; ubiquinone biosynthesis. Its function is as follows. Methyltransferase required for the conversion of demethylmenaquinol (DMKH2) to menaquinol (MKH2) and the conversion of 2-polyprenyl-6-methoxy-1,4-benzoquinol (DDMQH2) to 2-polyprenyl-3-methyl-6-methoxy-1,4-benzoquinol (DMQH2). The sequence is that of Ubiquinone/menaquinone biosynthesis C-methyltransferase UbiE from Marinomonas sp. (strain MWYL1).